Here is a 428-residue protein sequence, read N- to C-terminus: MSVNLLKETGPREVFCGLTSIVWLHRRMPDAFFLVVGSRTCAHLIQSAAGVMIFAEPRFGTAILSERDLAGLADAQDELDRVARELLERRPEIRTLFLVGSCPSEVIKLDLARAAERLNDELRGRVQVVNYSGSGIETTFTQGEDGALSALVPLLPSTDQRQLLMVGTLADAVEDRLTHLFGRIGIDSVCSLPPRKSTELPAVGPGTTVLLTQPYLTTTARLLRDRGARVLTAPFPLGAEGSRSWMEAAAKDFQINADQVASVLDPLVARAQSALAPHREILNGKRIFLLPESQLELPLARFLQRECGMELVEVGTPYLNREQMAEELALLPEGTSVMEGQHVENQLDRVRATQPDLVVCGMGLANPLEAEGIATKWSIELVFSPIHGIDQAGELAELFSRPLRRRELIRQALNPPSSALIDSDPVHA.

3 residues coordinate [4Fe-4S] cluster: Cys16, Cys41, and Cys102.

It belongs to the BchN/ChlN family. As to quaternary structure, protochlorophyllide reductase is composed of three subunits; ChlL, ChlN and ChlB. Forms a heterotetramer of two ChlB and two ChlN subunits. [4Fe-4S] cluster is required as a cofactor.

The enzyme catalyses chlorophyllide a + oxidized 2[4Fe-4S]-[ferredoxin] + 2 ADP + 2 phosphate = protochlorophyllide a + reduced 2[4Fe-4S]-[ferredoxin] + 2 ATP + 2 H2O. Its pathway is porphyrin-containing compound metabolism; chlorophyll biosynthesis (light-independent). In terms of biological role, component of the dark-operative protochlorophyllide reductase (DPOR) that uses Mg-ATP and reduced ferredoxin to reduce ring D of protochlorophyllide (Pchlide) to form chlorophyllide a (Chlide). This reaction is light-independent. The NB-protein (ChlN-ChlB) is the catalytic component of the complex. This is Light-independent protochlorophyllide reductase subunit N from Synechococcus sp. (strain CC9311).